A 309-amino-acid polypeptide reads, in one-letter code: MVKVYAPASSANMSVGFDVLGAAVTPVDGTLLGDNVTVEAAEQFSLQNLGRFASKLPTAPQENIVYQCWESFCREIGKTVPVAMTLEKNMPIGSGLGSSACSVVAALVAMNEFCGKPLNETRMLALMGEMEGRISGSIHYDNVAPCYLGGMQLMIEENGIISQQVPGFDEWLWVLAYPGIKVSTAEARAILPAQYRRQDCIAHGRHLAGFIHACYTRQPQLAAKLMKDVIAEPYRTKLLPGFSEARQAAMEMGAQACGISGSGPTLFALCDKPDTAQRVADWLGAHYLQNQEGFVHICRLDTAGARVVG.

91–101 provides a ligand contact to ATP; it reads PIGSGLGSSAC.

The protein belongs to the GHMP kinase family. Homoserine kinase subfamily.

It is found in the cytoplasm. The enzyme catalyses L-homoserine + ATP = O-phospho-L-homoserine + ADP + H(+). It functions in the pathway amino-acid biosynthesis; L-threonine biosynthesis; L-threonine from L-aspartate: step 4/5. In terms of biological role, catalyzes the ATP-dependent phosphorylation of L-homoserine to L-homoserine phosphate. The chain is Homoserine kinase from Klebsiella pneumoniae subsp. pneumoniae (strain ATCC 700721 / MGH 78578).